We begin with the raw amino-acid sequence, 99 residues long: Malonate decarboxylase acyl carrier protein (99 aa).

Ser25 carries the post-translational modification O-(phosphoribosyl dephospho-coenzyme A)serine.

The protein belongs to the MdcC family. In terms of processing, covalently binds the prosthetic group of malonate decarboxylase.

Its subcellular location is the cytoplasm. In terms of biological role, subunit of malonate decarboxylase, it is an acyl carrier protein to which acetyl and malonyl thioester residues are bound via a 2'-(5''-phosphoribosyl)-3'-dephospho-CoA prosthetic group and turn over during the catalytic mechanism. The polypeptide is Malonate decarboxylase acyl carrier protein (Pseudomonas putida (strain W619)).